Consider the following 158-residue polypeptide: Ribosomal RNA large subunit methyltransferase H (158 aa).

S-adenosyl-L-methionine is bound by residues L74, G105, and 124 to 129; that span reads LGPLTL.

It belongs to the RNA methyltransferase RlmH family. Homodimer.

Its subcellular location is the cytoplasm. The catalysed reaction is pseudouridine(1915) in 23S rRNA + S-adenosyl-L-methionine = N(3)-methylpseudouridine(1915) in 23S rRNA + S-adenosyl-L-homocysteine + H(+). Its function is as follows. Specifically methylates the pseudouridine at position 1915 (m3Psi1915) in 23S rRNA. This chain is Ribosomal RNA large subunit methyltransferase H, found in Xylella fastidiosa (strain 9a5c).